A 374-amino-acid polypeptide reads, in one-letter code: MSLLASPFAQLDLIRQPEQQNEPLQAFDAADEYLLNHLAEQQPASDTRVLVLNDSFGALAASLLGKVQVSSSGDSYLGALALEKNLVRNGLPFDAVRVVPASEPLAGPFDRVLIRVPKTLALLEEQLIRLQGQLAPGAQVVAAAMVKHLPRAAGDLLERYIGPVQASLAVKKARLLIATPQDKQPVVSPYPTRYRLEQPAIELLNHANVFCREGLDIGTRAFLPHLPQNLGSARVADLGCGNGVLAIASALDNPQAHYTLVDESFMAVQSARENWQAVLGEREAQMRAGDGLAGQAAQSLEVVLCNPPFHQQQVVGDFLAWRMFQQAREALVVGGALYIVGNRHLGYHSKLARLFRGVEQVAATPKFVILKARK.

It belongs to the methyltransferase superfamily. RlmG family.

The protein localises to the cytoplasm. It carries out the reaction guanosine(1835) in 23S rRNA + S-adenosyl-L-methionine = N(2)-methylguanosine(1835) in 23S rRNA + S-adenosyl-L-homocysteine + H(+). In terms of biological role, specifically methylates the guanine in position 1835 (m2G1835) of 23S rRNA. This chain is Ribosomal RNA large subunit methyltransferase G, found in Pseudomonas fluorescens (strain ATCC BAA-477 / NRRL B-23932 / Pf-5).